Consider the following 53-residue polypeptide: Rubredoxin (53 aa).

Residues 1–53 (MQKYVCDICGYVYDPAVGDPDNGVAPGTAFADLPEDWVCPECGVSKDEFSPEA) enclose the Rubredoxin-like domain. Fe cation is bound by residues Cys6, Cys9, Cys39, and Cys42.

It belongs to the rubredoxin family. Requires Fe(3+) as cofactor.

Functionally, rubredoxin is a small nonheme, iron protein lacking acid-labile sulfide. Its single Fe, chelated to 4 Cys, functions as an electron acceptor and may also stabilize the conformation of the molecule. The polypeptide is Rubredoxin (Butyribacterium methylotrophicum).